Consider the following 428-residue polypeptide: Glutamate-1-semialdehyde 2,1-aminomutase (428 aa).

At lysine 267 the chain carries N6-(pyridoxal phosphate)lysine.

It belongs to the class-III pyridoxal-phosphate-dependent aminotransferase family. HemL subfamily. In terms of assembly, homodimer. Pyridoxal 5'-phosphate serves as cofactor.

It is found in the cytoplasm. The enzyme catalyses (S)-4-amino-5-oxopentanoate = 5-aminolevulinate. The protein operates within porphyrin-containing compound metabolism; protoporphyrin-IX biosynthesis; 5-aminolevulinate from L-glutamyl-tRNA(Glu): step 2/2. This Desulforapulum autotrophicum (strain ATCC 43914 / DSM 3382 / VKM B-1955 / HRM2) (Desulfobacterium autotrophicum) protein is Glutamate-1-semialdehyde 2,1-aminomutase.